Here is a 1151-residue protein sequence, read N- to C-terminus: Phospholipid-transporting ATPase NEO1 (1151 aa).

Disordered stretches follow at residues 1 to 21 (MPNPPSFKSHKQNLFNSNNNQ) and 73 to 95 (LDNFSNHSSDSHRKSSNTDTHPL). Topologically, residues 1–184 (MPNPPSFKSH…LSNAKYNAVT (184 aa)) are extracellular. The segment covering 12-21 (QNLFNSNNNQ) has biased composition (polar residues). The interval 51–104 (EPLSKHNTVGDRESFEMRTVDDLDNFSNHSSDSHRKSSNTDTHPLMYDNRLSQD) is required for endosome-to-Golgi sorting. Ser102 carries the post-translational modification Phosphoserine. Residues 185–205 (FVPTLLYEQFKFFYNLYFLVV) form a helical membrane-spanning segment. Topologically, residues 206-209 (ALSQ) are cytoplasmic. The chain crosses the membrane as a helical span at residues 210–230 (AVPALRIGYLSSYIVPLAFVL). Topologically, residues 231–367 (TVTMAKEAID…TSNPLSVDNT (137 aa)) are extracellular. A helical membrane pass occupies residues 368 to 388 (LWANTVLASSGFCIACVVYTG). Topologically, residues 389 to 416 (RDTRQAMNTTTAKVKTGLLELEINSISK) are cytoplasmic. The chain crosses the membrane as a helical span at residues 417–437 (ILCACVFALSILLVAFAGFHN). Residue Asp438 is a topological domain, extracellular. Residues 439 to 459 (DWYIDILRYLILFSTIIPVSL) traverse the membrane as a helical segment. Residues 460–947 (RVNLDLAKSV…KLAQFVMHRG (488 aa)) are Cytoplasmic-facing. The active-site 4-aspartylphosphate intermediate is the Asp503. 3 residues coordinate ATP: Asp503, Lys504, and Thr505. Asp503 is a binding site for Mg(2+). A Mg(2+)-binding site is contributed by Thr505. Position 551 is a phosphoserine (Ser551). ATP contacts are provided by Glu597, Phe640, Ser642, Lys645, Lys664, Arg693, Thr694, Thr774, Gly775, Asp776, Arg856, and Lys862. Position 882 (Asp882) interacts with Mg(2+). ATP contacts are provided by Asn885 and Asp886. Mg(2+) is bound at residue Asp886. A helical membrane pass occupies residues 948–968 (LIIAICQAVYSICSLFEPIAL). The Extracellular segment spans residues 969-970 (YQ). A helical membrane pass occupies residues 971-991 (GWLMVGYATCYTMAPVFSLTL). Topologically, residues 992 to 1020 (DHDIEESLTKIYPELYKELTEGKSLSYKT) are cytoplasmic. A helical membrane pass occupies residues 1021–1041 (FFVWVLLSLFQGSVIQLFSQA). The Extracellular portion of the chain corresponds to 1042 to 1052 (FTSLLDTDFTR). A helical membrane pass occupies residues 1053 to 1073 (MVAISFTALVVNELIMVALEI). Topologically, residues 1074–1078 (YTWNK) are cytoplasmic. The helical transmembrane segment at 1079-1099 (TMLVTEIATLLFYIVSVPFLG) threads the bilayer. The Extracellular segment spans residues 1100–1109 (DYFDLGYMTT). A helical transmembrane segment spans residues 1110–1130 (VNYYAGLLVILLISIFPVWTA). Residues 1131–1151 (KAIYRRLHPPSYAKVQEFATP) lie on the Cytoplasmic side of the membrane. The interval 1131–1151 (KAIYRRLHPPSYAKVQEFATP) is required for endosomal targeting.

Belongs to the cation transport ATPase (P-type) (TC 3.A.3) family. Type IV subfamily. As to quaternary structure, interacts with MON2. Interacts with ANY1. Functions without a CDC50/LEM3 family accessory subunit. Mg(2+) is required as a cofactor.

It localises to the endosome membrane. The protein resides in the golgi apparatus membrane. The catalysed reaction is ATP + H2O + phospholipidSide 1 = ADP + phosphate + phospholipidSide 2.. It catalyses the reaction a 1,2-diacyl-sn-glycero-3-phospho-L-serine(out) + ATP + H2O = a 1,2-diacyl-sn-glycero-3-phospho-L-serine(in) + ADP + phosphate + H(+). The enzyme catalyses a 1,2-diacyl-sn-glycero-3-phosphoethanolamine(out) + ATP + H2O = a 1,2-diacyl-sn-glycero-3-phosphoethanolamine(in) + ADP + phosphate + H(+). In terms of biological role, flippase that catalyzes the hydrolysis of ATP coupled to the transport of lysophosphatidylserine, phosphatidylethanolamine, and phosphatidylserine from the lumenal to the cytosolic leaflet of the Golgi apparatus membrane and ensures the maintenance of asymmetric distribution of phospholipids. Does not appear to transport phosphatidylcholine or sphingomyelin. May be involved in recycling from endosomes by driving the formation of SNX3-dependent recycling tubules. Required for COPI retrograde transport from the Golgi to the endoplasmic reticulum, Golgi-endosome trafficking, and Golgi-dependent protein glycosylation. This Saccharomyces cerevisiae (strain ATCC 204508 / S288c) (Baker's yeast) protein is Phospholipid-transporting ATPase NEO1.